Reading from the N-terminus, the 604-residue chain is MPSIKLLVWCCLCVISPRLCHSEKLFHSRDRSDLQPSAIEQAELVKDMLSAQQFLAKYGWTQPVIWDPSSTNENEPLKDFSLMQEGVCNPRQEVAEPTKSPQFIDALKKFQKLNNLPVTGTLDDATINAMNKPRCGVPDNQMAKKETEKPTAAQSLENKTKDSENVTQQNPDPPKIRRKRFLDMLMYSNKYREEQEALQKSTGKVFTKKLLKWRMIGEGYSNQLSINEQRYVFRLAFRMWSEVMPLDFEEDNTSPLSQIDIKLGFGRGRHLGCSRAFDGSGQEFAHAWFLGDIHFDDDEHFTAPSSEHGISLLKVAAHEIGHVLGLSHIHRVGSIMQPNYIPQDSGFELDLSDRRAIQNLYGSCEGPFDTAFDWIYKEKNQYGELVVRYNTYFFRNSWYWMYENRSNRTRYGDPLAIANGWHGIPVQNIDAFVHVWTWTRDASYFFKGTQYWRYDSENDKAYAEDAQGKSYPRLISEGFPGIPSPINAAYFDRRRQYIYFFRDSQVFAFDINRNRVAPDFPKRILDFFPAVAANNHPKGNIDVAYYSYTYSSLFLFKGKEFWKVVSDKDRRQNPSLPYNGLFPRRAISQQWFDICNVHPSLLKI.

The N-terminal stretch at 1-22 is a signal peptide; that stretch reads MPSIKLLVWCCLCVISPRLCHS. A propeptide spanning residues 23–180 is cleaved from the precursor; that stretch reads EKLFHSRDRS…PDPPKIRRKR (158 aa). The interval 132-175 is disordered; sequence KPRCGVPDNQMAKKETEKPTAAQSLENKTKDSENVTQQNPDPPK. The Cysteine switch signature appears at 133-140; it reads PRCGVPDN. Position 135 (C135) interacts with Zn(2+). N158 and N165 each carry an N-linked (GlcNAc...) asparagine glycan. H318 contacts Zn(2+). Residue E319 is part of the active site. Residues H322 and H328 each contribute to the Zn(2+) site. A disulfide bond links C364 and C595. 4 Hemopexin repeats span residues 365–424, 426–482, 483–531, and 538–594; these read EGPF…WHGI, VQNI…FPGI, PSPI…FPAV, and KGNI…WFDI. N404 and N407 each carry an N-linked (GlcNAc...) asparagine glycan.

The protein belongs to the peptidase M10A family. The cofactor is Zn(2+). Ca(2+) is required as a cofactor. Post-translationally, the precursor is cleaved by a furin endopeptidase.

Its subcellular location is the secreted. Functionally, plays a specialized role in the generation of left-right asymmetry during embryogenesis. May act as a negative regulator of the NOTCH-signaling pathway. The polypeptide is Matrix metalloproteinase-21 (mmp21) (Xenopus laevis (African clawed frog)).